The sequence spans 1104 residues: Nitrite reductase [NAD(P)H] (1104 aa).

44 to 79 (QKIVVVGLGMVAVAFIEKLVKLDSERRKYDIVVIGE) is a binding site for FAD. Residue 146–176 (YDILVLATGSDAVLPTSTPGHDAKGIFVYRT) coordinates NAD(+). The segment at 396–419 (KFLPGQRPSAESIGAADPNREEEP) is disordered. 4 residues coordinate [2Fe-2S] cluster: cysteine 500, cysteine 502, cysteine 535, and cysteine 538. Positions 720, 726, 760, and 764 each coordinate [4Fe-4S] cluster. Cysteine 764 is a siroheme binding site. Residues 932–1040 (WQPVIKADYF…VEEREDGWIY (109 aa)) enclose the Rieske domain. [2Fe-2S] cluster-binding residues include cysteine 976, histidine 978, cysteine 1001, and histidine 1004. Residues 1081 to 1104 (GKRAGAKGIEGSKPTRSPSNTIDW) are disordered. Residues 1094–1104 (PTRSPSNTIDW) are compositionally biased toward polar residues.

This sequence belongs to the nitrite and sulfite reductase 4Fe-4S domain family. Homodimer. Siroheme is required as a cofactor. The cofactor is [4Fe-4S] cluster. It depends on FAD as a cofactor. [2Fe-2S] cluster serves as cofactor.

The enzyme catalyses NH4(+) + 3 NADP(+) + 2 H2O = nitrite + 3 NADPH + 5 H(+). The catalysed reaction is NH4(+) + 3 NAD(+) + 2 H2O = nitrite + 3 NADH + 5 H(+). The protein operates within nitrogen metabolism; nitrate reduction (assimilation). This is Nitrite reductase [NAD(P)H] (niiA) from Emericella nidulans (strain FGSC A4 / ATCC 38163 / CBS 112.46 / NRRL 194 / M139) (Aspergillus nidulans).